A 239-amino-acid chain; its full sequence is Ribosomal RNA small subunit methyltransferase G (239 aa).

Residues Gly-77, Phe-82, Ala-128 to Glu-129, and Arg-147 each bind S-adenosyl-L-methionine.

The protein belongs to the methyltransferase superfamily. RNA methyltransferase RsmG family.

Its subcellular location is the cytoplasm. Its function is as follows. Specifically methylates the N7 position of guanine in position 535 of 16S rRNA. In Bacillus mycoides (strain KBAB4) (Bacillus weihenstephanensis), this protein is Ribosomal RNA small subunit methyltransferase G.